We begin with the raw amino-acid sequence, 134 residues long: Putative protein KRIP1 (134 aa).

The segment at 1–134 is disordered; the sequence is MSPVHRSRTS…PDPALPLQML (134 aa). Polar residues-rich tracts occupy residues 9 to 24, 43 to 55, and 64 to 79; these read TSQT…TLSF, SQPN…SHVS, and CSQS…TNPN. The span at 119 to 128 shows a compositional bias: pro residues; that stretch reads PAKPALPDPA.

In terms of tissue distribution, abundant expression is found in prostate, restricted to cells of epithelial origin in normal and diseased glands. Very low expression is detected in pancreas and ovary.

Its subcellular location is the cytoplasm. It is found in the nucleus. This is Putative protein KRIP1 (KLKP1) from Homo sapiens (Human).